The following is a 274-amino-acid chain: Putative phosphoenolpyruvate synthase regulatory protein (274 aa).

157–164 is a binding site for ADP; it reads GVSRCGKT.

This sequence belongs to the pyruvate, phosphate/water dikinase regulatory protein family. PSRP subfamily.

It carries out the reaction [pyruvate, water dikinase] + ADP = [pyruvate, water dikinase]-phosphate + AMP + H(+). The enzyme catalyses [pyruvate, water dikinase]-phosphate + phosphate + H(+) = [pyruvate, water dikinase] + diphosphate. Its function is as follows. Bifunctional serine/threonine kinase and phosphorylase involved in the regulation of the phosphoenolpyruvate synthase (PEPS) by catalyzing its phosphorylation/dephosphorylation. This Bordetella avium (strain 197N) protein is Putative phosphoenolpyruvate synthase regulatory protein.